The sequence spans 125 residues: Small ribosomal subunit protein uS12 (125 aa).

The interval 1–27 is disordered; that stretch reads MPTINQLVRKGREKGEQKSTAPALKSC. Asp89 carries the 3-methylthioaspartic acid modification. The disordered stretch occupies residues 103–125; the sequence is DASGVQKRNQGRSKYGTKRPKKK. The span at 111-125 shows a compositional bias: basic residues; that stretch reads NQGRSKYGTKRPKKK.

The protein belongs to the universal ribosomal protein uS12 family. As to quaternary structure, part of the 30S ribosomal subunit. Contacts proteins S8 and S17. May interact with IF1 in the 30S initiation complex.

Its function is as follows. With S4 and S5 plays an important role in translational accuracy. In terms of biological role, interacts with and stabilizes bases of the 16S rRNA that are involved in tRNA selection in the A site and with the mRNA backbone. Located at the interface of the 30S and 50S subunits, it traverses the body of the 30S subunit contacting proteins on the other side and probably holding the rRNA structure together. The combined cluster of proteins S8, S12 and S17 appears to hold together the shoulder and platform of the 30S subunit. The sequence is that of Small ribosomal subunit protein uS12 from Syntrophomonas wolfei subsp. wolfei (strain DSM 2245B / Goettingen).